We begin with the raw amino-acid sequence, 178 residues long: Caveolin-1 (178 aa).

Residue Ser-2 is modified to N-acetylserine. Phosphoserine is present on Ser-2. Residues 2-94 (SGGKYVDSEG…WKASFTTFTV (93 aa)) are required for homooligomerization. At 2-104 (SGGKYVDSEG…TKYWFYRLLS (103 aa)) the chain is on the cytoplasmic side. Lys-5 carries the post-translational modification N6-acetyllysine; alternate. Lys-5 is covalently cross-linked (Glycyl lysine isopeptide (Lys-Gly) (interchain with G-Cter in ubiquitin); alternate). Position 6 is a phosphotyrosine (Tyr-6). Phosphoserine is present on Ser-9. Tyr-14 carries the phosphotyrosine; by ABL1 modification. Phosphotyrosine is present on Tyr-25. Residues Lys-26 and Lys-30 each participate in a glycyl lysine isopeptide (Lys-Gly) (interchain with G-Cter in ubiquitin) cross-link. Residue Ser-37 is modified to Phosphoserine. Glycyl lysine isopeptide (Lys-Gly) (interchain with G-Cter in ubiquitin) cross-links involve residues Lys-39, Lys-47, and Lys-57. The segment at 82–94 (DGIWKASFTTFTV) is interaction with CAVIN3. The segment at residues 105–125 (ALFGIPMALIWGIYFAILSFL) is an intramembrane region (helical). The Cytoplasmic portion of the chain corresponds to 126 to 178 (HIWAVVPCIKSFLIEIQCISRVYSIYVHTFCDPFFEAVGKIFSNIRINMQKET). Positions 131 to 142 (VPCIKSFLIEIQ) are interacts with SPRY1, SPRY2, SPRY3 and SPRY4. 3 S-palmitoyl cysteine lipidation sites follow: Cys-133, Cys-143, and Cys-156. The interacts with SPRY1, SPRY2, and SPRY4 stretch occupies residues 149 to 160 (SIYVHTFCDPFF). Residues 167–178 (FSNIRINMQKET) are interacts with SPRY1, SPRY2, SPRY3 and SPRY4.

It belongs to the caveolin family. In terms of assembly, homooligomer. Interacts with BMX, BTK, GLIPR2, NOSTRIN, SNAP25 and STX1A. Interacts with PACSIN2; this interaction induces membrane tubulation. Interacts (via the N-terminus) with DPP4; the interaction is direct. Interacts with SLC7A9. Interacts with CTNNB1, CDH1 and JUP. Interacts with TGFBR1. Interacts with CAVIN3 (via leucine-zipper domain) in a cholesterol-sensitive manner. Interacts with CAVIN1. Interacts with EHD2 in a cholesterol-dependent manner. Forms a ternary complex with UBXN6 and VCP; mediates CAV1 targeting to lysosomes for degradation. Interacts with ABCG1; this interaction regulates ABCG1-mediated cholesterol efflux. Interacts with NEU3; this interaction enhances NEU3 sialidase activity within caveola. Interacts (via C-terminus) with SPRY1, SPRY2 (via C-terminus), SPRY3, and SPRY4. Interacts with IGFBP5; this interaction allows trafficking of IGFBP5 from the plasma membrane to the nucleus. In terms of processing, phosphorylation of isoform Beta on serine residues is constitutive. Phosphorylated at Tyr-14 by ABL1 in response to oxidative stress. Ubiquitinated. Undergo monoubiquitination and multi- and/or polyubiquitination. Monoubiquitination of N-terminal lysines promotes integration in a ternary complex with UBXN6 and VCP which promotes oligomeric CAV1 targeting to lysosomes for degradation. Ubiquitinated by ZNRF1; leading to degradation and modulation of the TLR4-mediated immune response.

The protein localises to the golgi apparatus membrane. It is found in the cell membrane. The protein resides in the membrane. Its subcellular location is the caveola. It localises to the membrane raft. The protein localises to the golgi apparatus. It is found in the trans-Golgi network. May act as a scaffolding protein within caveolar membranes. Forms a stable heterooligomeric complex with CAV2 that targets to lipid rafts and drives caveolae formation. Mediates the recruitment of CAVIN proteins (CAVIN1/2/3/4) to the caveolae. Interacts directly with G-protein alpha subunits and can functionally regulate their activity. Involved in the costimulatory signal essential for T-cell receptor (TCR)-mediated T-cell activation. Its binding to DPP4 induces T-cell proliferation and NF-kappa-B activation in a T-cell receptor/CD3-dependent manner. Recruits CTNNB1 to caveolar membranes and may regulate CTNNB1-mediated signaling through the Wnt pathway. Negatively regulates TGFB1-mediated activation of SMAD2/3 by mediating the internalization of TGFBR1 from membrane rafts leading to its subsequent degradation. Binds 20(S)-hydroxycholesterol (20(S)-OHC). This Canis lupus familiaris (Dog) protein is Caveolin-1 (CAV1).